A 197-amino-acid polypeptide reads, in one-letter code: Protein jagunal (197 aa).

Residues 1-39 (MATRGGPMVAGTDGNDFEFRQRVAGTYQISLLNKSRLKY) are Cytoplasmic-facing. The chain crosses the membrane as a helical span at residues 40–60 (CIFFHALLFFVMLAKLTSDIL). The Lumenal portion of the chain corresponds to 61–78 (DHLDIFVLEIEELEVPPP). Residues 79-99 (LWWEYVWAASLLTSFLGLSAA) form a helical membrane-spanning segment. The Cytoplasmic portion of the chain corresponds to 100 to 109 (RGNKVREMQK). A helical membrane pass occupies residues 110 to 130 (YMVAILLFAILPLFYCFAYYF). Over 131–159 (SDVWEFATLDKSVELDETDIFVWRGYPYG) the chain is Lumenal. Residues 160-180 (VFWYAFCFVGFQVHGFTLYFA) traverse the membrane as a helical segment. Residues 181–197 (YNLVKAWKARTATRKFQ) are Cytoplasmic-facing.

The protein belongs to the jagunal family.

The protein resides in the endoplasmic reticulum membrane. In terms of biological role, required for endoplasmic reticulum organization and proper vesicular traffic during vitellogenesis. Required for oocyte and bristle growth. This is Protein jagunal from Drosophila melanogaster (Fruit fly).